The following is a 537-amino-acid chain: Phosphoenolpyruvate carboxykinase (ATP) (537 aa).

The substrate site is built by Arg61, Tyr195, and Lys201. ATP-binding positions include Lys201, His220, and 236 to 244 (GLSGTGKTT). 2 residues coordinate Mn(2+): Lys201 and His220. Asp257 serves as a coordination point for Mn(2+). Glu285, Arg323, and Thr448 together coordinate ATP. Residue Arg323 coordinates substrate.

The protein belongs to the phosphoenolpyruvate carboxykinase (ATP) family. Mn(2+) serves as cofactor.

The protein localises to the cytoplasm. The catalysed reaction is oxaloacetate + ATP = phosphoenolpyruvate + ADP + CO2. It functions in the pathway carbohydrate biosynthesis; gluconeogenesis. In terms of biological role, involved in the gluconeogenesis. Catalyzes the conversion of oxaloacetate (OAA) to phosphoenolpyruvate (PEP) through direct phosphoryl transfer between the nucleoside triphosphate and OAA. The protein is Phosphoenolpyruvate carboxykinase (ATP) of Rhodopseudomonas palustris (strain TIE-1).